We begin with the raw amino-acid sequence, 715 residues long: ATP-dependent DNA helicase Hel308 (715 aa).

Positions 1 to 29 (MKVEELRIDERIKEVLKKRGISELYPPQA) match the Q motif motif. ATP-binding positions include Gln-28 and 46-53 (IPTASGKT). Residues 33 to 197 (TSGILKGENA…WLNAKLIKSD (165 aa)) enclose the Helicase ATP-binding domain. The short motif at 145 to 148 (DEIH) is the DEAH box element. One can recognise a Helicase C-terminal domain in the interval 229–422 (LVYDAIKRSK…ILRGQILALI (194 aa)).

Belongs to the helicase family. Hel308 subfamily. In terms of assembly, monomer.

It carries out the reaction Couples ATP hydrolysis with the unwinding of duplex DNA by translocating in the 3'-5' direction.. The catalysed reaction is ATP + H2O = ADP + phosphate + H(+). DNA-dependent ATPase and 3'-5' DNA helicase that may be involved in repair of stalled replication forks. The chain is ATP-dependent DNA helicase Hel308 from Pyrococcus horikoshii (strain ATCC 700860 / DSM 12428 / JCM 9974 / NBRC 100139 / OT-3).